A 426-amino-acid chain; its full sequence is Serine--tRNA ligase (426 aa).

Thr229–Glu231 contributes to the L-serine binding site. Residues Arg260 to Glu262 and Val276 each bind ATP. Position 283 (Glu283) interacts with L-serine. Glu350–Ser353 is an ATP binding site. Residue Thr386 participates in L-serine binding.

The protein belongs to the class-II aminoacyl-tRNA synthetase family. Type-1 seryl-tRNA synthetase subfamily. Homodimer. The tRNA molecule binds across the dimer.

Its subcellular location is the cytoplasm. The catalysed reaction is tRNA(Ser) + L-serine + ATP = L-seryl-tRNA(Ser) + AMP + diphosphate + H(+). The enzyme catalyses tRNA(Sec) + L-serine + ATP = L-seryl-tRNA(Sec) + AMP + diphosphate + H(+). Its pathway is aminoacyl-tRNA biosynthesis; selenocysteinyl-tRNA(Sec) biosynthesis; L-seryl-tRNA(Sec) from L-serine and tRNA(Sec): step 1/1. Functionally, catalyzes the attachment of serine to tRNA(Ser). Is also able to aminoacylate tRNA(Sec) with serine, to form the misacylated tRNA L-seryl-tRNA(Sec), which will be further converted into selenocysteinyl-tRNA(Sec). This chain is Serine--tRNA ligase, found in Rhodopirellula baltica (strain DSM 10527 / NCIMB 13988 / SH1).